Consider the following 238-residue polypeptide: Ribitol-5-phosphate cytidylyltransferase 1 (238 aa).

CTP is bound by residues 7-10 (LAGG) and 81-87 (GSDRNDT).

Belongs to the IspD/TarI cytidylyltransferase family. TarI subfamily.

The enzyme catalyses D-ribitol 5-phosphate + CTP + H(+) = CDP-L-ribitol + diphosphate. It functions in the pathway cell wall biogenesis; poly(ribitol phosphate) teichoic acid biosynthesis. Catalyzes the transfer of the cytidylyl group of CTP to D-ribitol 5-phosphate. This Staphylococcus aureus (strain bovine RF122 / ET3-1) protein is Ribitol-5-phosphate cytidylyltransferase 1.